Consider the following 128-residue polypeptide: Probable 4-amino-4-deoxy-L-arabinose-phosphoundecaprenol flippase subunit ArnF (128 aa).

Residues 1 to 2 (MG) are Cytoplasmic-facing. Residues 3–23 (LMWGLFSVIIASAAQLSLGFA) form a helical membrane-spanning segment. Over 24–35 (ASHLPPMTHLWD) the chain is Periplasmic. The chain crosses the membrane as a helical span at residues 36-56 (FIAALLAFGLDARILLLGLLG). Topologically, residues 57-76 (YLLSVFCWYKTLHKLALSKA) are cytoplasmic. Residues 77–97 (YALLSMSYVLVWIASMILPGW) form a helical membrane-spanning segment. The Periplasmic segment spans residues 98-100 (EGT). Residues 101–121 (FSLKALLGVACIMSGLMLIFL) form a helical membrane-spanning segment. Residues 122 to 128 (PTTKQRY) lie on the Cytoplasmic side of the membrane.

It belongs to the ArnF family. As to quaternary structure, heterodimer of ArnE and ArnF.

The protein resides in the cell inner membrane. Its pathway is bacterial outer membrane biogenesis; lipopolysaccharide biosynthesis. Functionally, translocates 4-amino-4-deoxy-L-arabinose-phosphoundecaprenol (alpha-L-Ara4N-phosphoundecaprenol) from the cytoplasmic to the periplasmic side of the inner membrane. This is Probable 4-amino-4-deoxy-L-arabinose-phosphoundecaprenol flippase subunit ArnF from Escherichia coli O17:K52:H18 (strain UMN026 / ExPEC).